A 347-amino-acid chain; its full sequence is NADH-ubiquinone oxidoreductase chain 2 (347 aa).

Transmembrane regions (helical) follow at residues 13-33 (VFTGTLITALSSHWFFAWLGL), 55-75 (AAIKYFLTQATASMIFLMAIL), 96-116 (LMIVTALAMKLGMAPFHFWVP), 122-142 (VPLTSGLLLLTWQKLAPISIM), 151-171 (TNILLTLSILSILVGSWGGLN), 178-198 (ILAYSSITHMGWMVAVLPYNP), 199-219 (NITILNLIIYITLTTTTFLIL), 237-257 (LTWLMPLISSTLLSLGGLPPL), 277-297 (IAPTIMAIISLLNLYFYARLI), and 326-346 (LPTLTILTALLLPISPLILSI).

This sequence belongs to the complex I subunit 2 family. As to quaternary structure, core subunit of respiratory chain NADH dehydrogenase (Complex I) which is composed of 45 different subunits. Interacts with TMEM242.

The protein localises to the mitochondrion inner membrane. The catalysed reaction is a ubiquinone + NADH + 5 H(+)(in) = a ubiquinol + NAD(+) + 4 H(+)(out). Functionally, core subunit of the mitochondrial membrane respiratory chain NADH dehydrogenase (Complex I) which catalyzes electron transfer from NADH through the respiratory chain, using ubiquinone as an electron acceptor. Essential for the catalytic activity and assembly of complex I. The protein is NADH-ubiquinone oxidoreductase chain 2 of Pongo pygmaeus (Bornean orangutan).